The sequence spans 320 residues: 1-aminocyclopropane-1-carboxylate oxidase (320 aa).

A Fe2OG dioxygenase domain is found at 156–256 (PTFGTKVSNY…RMSIASFYNP (101 aa)). Residues His-180, Asp-182, and His-237 each coordinate Fe cation.

The protein belongs to the iron/ascorbate-dependent oxidoreductase family. Requires Fe cation as cofactor.

It catalyses the reaction 1-aminocyclopropane-1-carboxylate + L-ascorbate + O2 = ethene + L-dehydroascorbate + hydrogen cyanide + CO2 + 2 H2O. The protein operates within alkene biosynthesis; ethylene biosynthesis via S-adenosyl-L-methionine; ethylene from S-adenosyl-L-methionine: step 2/2. The polypeptide is 1-aminocyclopropane-1-carboxylate oxidase (ACO) (Brassica juncea (Indian mustard)).